Here is a 348-residue protein sequence, read N- to C-terminus: Protein RecA (348 aa).

ATP is bound at residue 65–72 (GPESSGKT). Residues 328 to 348 (SKPQAETSARLATQEELADDY) are disordered.

It belongs to the RecA family.

It is found in the cytoplasm. In terms of biological role, can catalyze the hydrolysis of ATP in the presence of single-stranded DNA, the ATP-dependent uptake of single-stranded DNA by duplex DNA, and the ATP-dependent hybridization of homologous single-stranded DNAs. It interacts with LexA causing its activation and leading to its autocatalytic cleavage. This chain is Protein RecA, found in Ectopseudomonas oleovorans (Pseudomonas oleovorans).